The primary structure comprises 473 residues: uncharacterized protein (473 aa).

The first 35 residues, 1–35 (MLWAHCGRFLRYHLLPLLLCRLPFLLFFQRPQWAH), serve as a signal peptide directing secretion. Disordered stretches follow at residues 142–201 (QRRR…RRRH), 232–254 (RGRLRHPAGSGPNTGGPRPGGAG), and 331–437 (IIPP…MTTN). Over residues 155–165 (PSFPPPDPPSQ) the composition is skewed to pro residues. A compositionally biased stretch (basic and acidic residues) spans 168-182 (EDARDADAERAESPH). Residues 243 to 254 (PNTGGPRPGGAG) are compositionally biased toward gly residues. Over residues 341–397 (QNEEPRQQLTGEETRNSTHTQREEVEDVSREGAREGNDGSRASGNDERRNNAGRYDD) the composition is skewed to basic and acidic residues.

The protein belongs to the HHV-5 UL13 protein family. As to quaternary structure, interacts with host MICOS complex subunits IMMT and CHCHD3.

The protein resides in the host mitochondrion. Functionally, plays an essential role during infection by modulating mitochondrial ultrastructure and thereby increasing bioenergetic potential. Mechanistically, alters cristae architecture by interacting with components of the host mitochondrial contact site and cristae organizing system (MICOS) complex. This is an uncharacterized protein from Human cytomegalovirus (strain Merlin) (HHV-5).